Here is a 110-residue protein sequence, read N- to C-terminus: Phosphoribosyl-AMP cyclohydrolase (110 aa).

Residue aspartate 80 coordinates Mg(2+). A Zn(2+)-binding site is contributed by cysteine 81. Mg(2+) contacts are provided by aspartate 82 and aspartate 84. Cysteine 97 and cysteine 104 together coordinate Zn(2+).

This sequence belongs to the PRA-CH family. In terms of assembly, homodimer. Requires Mg(2+) as cofactor. Zn(2+) is required as a cofactor.

Its subcellular location is the cytoplasm. The enzyme catalyses 1-(5-phospho-beta-D-ribosyl)-5'-AMP + H2O = 1-(5-phospho-beta-D-ribosyl)-5-[(5-phospho-beta-D-ribosylamino)methylideneamino]imidazole-4-carboxamide. It functions in the pathway amino-acid biosynthesis; L-histidine biosynthesis; L-histidine from 5-phospho-alpha-D-ribose 1-diphosphate: step 3/9. In terms of biological role, catalyzes the hydrolysis of the adenine ring of phosphoribosyl-AMP. This Clostridium botulinum (strain 657 / Type Ba4) protein is Phosphoribosyl-AMP cyclohydrolase.